The chain runs to 136 residues: Sec-independent protein translocase protein TatB (136 aa).

Residues 1–21 (MFDIGFWELVLISVIGLVVLG) form a helical membrane-spanning segment. Residues 66 to 136 (ASKQGLSDLD…TTPPRQDKNE (71 aa)) form a disordered region. 2 stretches are compositionally biased toward basic and acidic residues: residues 77–89 (ELQKSIDEMKETA) and 96–107 (YKKDIDDIKTSL). Residues 108 to 130 (DKNPSGTTQQENSILDSSKTTPP) are compositionally biased toward polar residues.

The protein belongs to the TatB family. As to quaternary structure, the Tat system comprises two distinct complexes: a TatABC complex, containing multiple copies of TatA, TatB and TatC subunits, and a separate TatA complex, containing only TatA subunits. Substrates initially bind to the TatABC complex, which probably triggers association of the separate TatA complex to form the active translocon.

The protein localises to the cell inner membrane. Part of the twin-arginine translocation (Tat) system that transports large folded proteins containing a characteristic twin-arginine motif in their signal peptide across membranes. Together with TatC, TatB is part of a receptor directly interacting with Tat signal peptides. TatB may form an oligomeric binding site that transiently accommodates folded Tat precursor proteins before their translocation. This chain is Sec-independent protein translocase protein TatB, found in Psychromonas ingrahamii (strain DSM 17664 / CCUG 51855 / 37).